The sequence spans 224 residues: 7-cyano-7-deazaguanine synthase (224 aa).

Position 14–24 (14–24 (FSGGQDSTTCL)) interacts with ATP. 4 residues coordinate Zn(2+): cysteine 190, cysteine 198, cysteine 201, and cysteine 204.

This sequence belongs to the QueC family. The cofactor is Zn(2+).

The enzyme catalyses 7-carboxy-7-deazaguanine + NH4(+) + ATP = 7-cyano-7-deazaguanine + ADP + phosphate + H2O + H(+). The protein operates within purine metabolism; 7-cyano-7-deazaguanine biosynthesis. Its function is as follows. Catalyzes the ATP-dependent conversion of 7-carboxy-7-deazaguanine (CDG) to 7-cyano-7-deazaguanine (preQ(0)). This is 7-cyano-7-deazaguanine synthase from Haemophilus ducreyi (strain 35000HP / ATCC 700724).